The primary structure comprises 174 residues: ATP-dependent protease subunit HslV (174 aa).

Thr2 is a catalytic residue. The Na(+) site is built by Gly157, Cys160, and Thr163.

This sequence belongs to the peptidase T1B family. HslV subfamily. In terms of assembly, a double ring-shaped homohexamer of HslV is capped on each side by a ring-shaped HslU homohexamer. The assembly of the HslU/HslV complex is dependent on binding of ATP.

Its subcellular location is the cytoplasm. The enzyme catalyses ATP-dependent cleavage of peptide bonds with broad specificity.. With respect to regulation, allosterically activated by HslU binding. Protease subunit of a proteasome-like degradation complex believed to be a general protein degrading machinery. In Shewanella pealeana (strain ATCC 700345 / ANG-SQ1), this protein is ATP-dependent protease subunit HslV.